Here is a 314-residue protein sequence, read N- to C-terminus: Homoserine kinase (314 aa).

95 to 105 contacts ATP; the sequence is PHSRGLGSSAA.

It belongs to the GHMP kinase family. Homoserine kinase subfamily.

The protein resides in the cytoplasm. It carries out the reaction L-homoserine + ATP = O-phospho-L-homoserine + ADP + H(+). Its pathway is amino-acid biosynthesis; L-threonine biosynthesis; L-threonine from L-aspartate: step 4/5. In terms of biological role, catalyzes the ATP-dependent phosphorylation of L-homoserine to L-homoserine phosphate. This chain is Homoserine kinase, found in Mycobacterium sp. (strain KMS).